Reading from the N-terminus, the 569-residue chain is Synaptotagmin-4 (569 aa).

The helical transmembrane segment at Met-1–Phe-21 threads the bilayer. One can recognise an SMP-LTD domain in the interval Gln-67–Leu-251. Positions Glu-229–Thr-531 are phospholipid binding. C2 domains are found at residues Arg-245–Leu-366 and Thr-426–Phe-543. Residues Asp-459, Asp-465, Asp-514, Asp-516, and Asp-521 each contribute to the Ca(2+) site.

Belongs to the synaptotagmin family. Ca(2+) is required as a cofactor.

The protein resides in the membrane. Its function is as follows. May be involved in membrane trafficking. The polypeptide is Synaptotagmin-4 (SYT4) (Arabidopsis thaliana (Mouse-ear cress)).